The chain runs to 1028 residues: Receptor-type guanylate cyclase gcy-13 (1028 aa).

Asn58, Asn156, Asn324, Asn337, Asn377, and Asn394 each carry an N-linked (GlcNAc...) asparagine glycan. A helical membrane pass occupies residues 438–458; that stretch reads IVVIVAVIIVLCCAAAAIAAF. The Cytoplasmic portion of the chain corresponds to 459–1028; that stretch reads LVIKARRDEE…WLLGMKEESA (570 aa). The tract at residues 491 to 511 is disordered; sequence ESHHSSRSLQSNSTTTTGTTG. Residues 497–511 show a composition bias toward low complexity; the sequence is RSLQSNSTTTTGTTG. Residues 499–770 enclose the Protein kinase domain; that stretch reads LQSNSTTTTG…DMVNKLMKNM (272 aa). Positions 786–817 form a coiled coil; the sequence is SVLEKHASSLEDEVQERMKELVEEKKKSDILL. A Guanylate cyclase domain is found at 844–974; it reads TIFFSDVVGF…DTVNTASRME (131 aa).

This sequence belongs to the adenylyl cyclase class-4/guanylyl cyclase family. Expressed bilaterally in RIM interneurons.

It is found in the cell membrane. It carries out the reaction GTP = 3',5'-cyclic GMP + diphosphate. Guanylate cyclase involved in the production of the second messenger cGMP. The protein is Receptor-type guanylate cyclase gcy-13 of Caenorhabditis elegans.